A 214-amino-acid chain; its full sequence is MTLGLVGRKVGMTRVFDEQGVSVPVTVLDMSANRVTQVKSKDTDGYTAVQVTFGQKKANRVNKAEAGHFAKAGVEAGRGLIEFALTEEKLAELKAGDEITVSMFEVGQLVDVTGTSKGKGFSGTIKRHNFGAQRTSHGNSRSHRVPGSIGMAQDPGRVFPGKRMAGQYGNTKATVQKLEVVRVDAERQLLLVKGAVPGAVNSDVVVRPSVKVGA.

A disordered region spans residues 131–155 (GAQRTSHGNSRSHRVPGSIGMAQDP). The residue at position 153 (Gln153) is an N5-methylglutamine.

It belongs to the universal ribosomal protein uL3 family. In terms of assembly, part of the 50S ribosomal subunit. Forms a cluster with proteins L14 and L19. Methylated by PrmB.

One of the primary rRNA binding proteins, it binds directly near the 3'-end of the 23S rRNA, where it nucleates assembly of the 50S subunit. This is Large ribosomal subunit protein uL3 from Neisseria gonorrhoeae (strain ATCC 700825 / FA 1090).